The primary structure comprises 49 residues: Large ribosomal subunit protein bL33B (49 aa).

The protein belongs to the bacterial ribosomal protein bL33 family.

This Oceanobacillus iheyensis (strain DSM 14371 / CIP 107618 / JCM 11309 / KCTC 3954 / HTE831) protein is Large ribosomal subunit protein bL33B.